The primary structure comprises 496 residues: Apolipoprotein N-acyltransferase (496 aa).

6 helical membrane-spanning segments follow: residues 23 to 43, 50 to 70, 84 to 104, 126 to 146, 171 to 191, and 205 to 225; these read GIATSTHFWLLFMPLSLFILW, LANFLWGFFFILVSHSWLYEL, LIISISILFGCSIIGGILVYL, LTIKVLLLSFAWGIGEFILSQ, WIGASGLCVVQLTIGFWIYLI, and FLFGLLILVILHFLGGLTNPI. Residues 236–464 form the CN hydrolase domain; that stretch reads WQTNMPTREK…NDVVNPNFSI (229 aa). Catalysis depends on Glu276, which acts as the Proton acceptor. The active site involves Lys325. The Nucleophile role is filled by Cys374. A helical transmembrane segment spans residues 476-496; sequence PLFLLCLFLIGLNLYFGKFTN.

It belongs to the CN hydrolase family. Apolipoprotein N-acyltransferase subfamily.

The protein localises to the cell inner membrane. The catalysed reaction is N-terminal S-1,2-diacyl-sn-glyceryl-L-cysteinyl-[lipoprotein] + a glycerophospholipid = N-acyl-S-1,2-diacyl-sn-glyceryl-L-cysteinyl-[lipoprotein] + a 2-acyl-sn-glycero-3-phospholipid + H(+). The protein operates within protein modification; lipoprotein biosynthesis (N-acyl transfer). Its function is as follows. Catalyzes the phospholipid dependent N-acylation of the N-terminal cysteine of apolipoprotein, the last step in lipoprotein maturation. This is Apolipoprotein N-acyltransferase from Prochlorococcus marinus subsp. pastoris (strain CCMP1986 / NIES-2087 / MED4).